Consider the following 276-residue polypeptide: Type 2 phosphatidylinositol 4,5-bisphosphate 4-phosphatase (276 aa).

Positions 1-10 are enriched in basic and acidic residues; sequence MAADGIDERS. A disordered region spans residues 1–27; the sequence is MAADGIDERSPLISPSSGNVTPTAPPY. A compositionally biased stretch (polar residues) spans 13-27; that stretch reads ISPSSGNVTPTAPPY. C106 is a catalytic residue. A CX5R motif motif is present at residues 106–112; that stretch reads CKDISRR. 2 consecutive transmembrane segments (helical) span residues 211–231 and 246–266; these read CCTYITMGMICIFIGVGLTVG and WAVAYLVGLVCLIRACYWGAI.

The protein localises to the late endosome membrane. It localises to the lysosome membrane. The catalysed reaction is a 1,2-diacyl-sn-glycero-3-phospho-(1D-myo-inositol-4,5-bisphosphate) + H2O = a 1,2-diacyl-sn-glycero-3-phospho-(1D-myo-inositol-5-phosphate) + phosphate. Its function is as follows. Catalyzes the hydrolysis of phosphatidylinositol-4,5-bisphosphate (PtdIns-4,5-P2) to phosphatidylinositol-4-phosphate (PtdIns-4-P). This Xenopus tropicalis (Western clawed frog) protein is Type 2 phosphatidylinositol 4,5-bisphosphate 4-phosphatase (pip4p2).